Consider the following 176-residue polypeptide: Putative Ras-related protein RABA4e (176 aa).

It belongs to the small GTPase superfamily. Rab family.

This chain is Putative Ras-related protein RABA4e (RABA4E), found in Arabidopsis thaliana (Mouse-ear cress).